The following is a 912-amino-acid chain: Probable dipeptidyl-aminopeptidase B (912 aa).

Residues 1 to 74 (MSSALSPEGD…GPFLGPGASL (74 aa)) are disordered. The Cytoplasmic segment spans residues 1–85 (MSSALSPEGD…REPMDRGLRR (85 aa)). Low complexity predominate over residues 16–27 (DSLSSVSTTSLV). Over residues 30-50 (RIQEKTEMDADNDKEKDPRAL) the composition is skewed to basic and acidic residues. Over residues 51 to 63 (DDEDPLRDEDDLE) the composition is skewed to acidic residues. The helical; Signal-anchor for type II membrane protein transmembrane segment at 86–106 (ILIIVAVVFIGGWLAGLGIFI) threads the bilayer. Residues 107–912 (ASGSYHHESD…KRHMVPQALV (806 aa)) lie on the Vacuolar side of the membrane. N-linked (GlcNAc...) asparagine glycosylation is present at N344. Residue S749 is the Charge relay system of the active site. An N-linked (GlcNAc...) asparagine glycan is attached at N808. Residues D826 and H859 each act as charge relay system in the active site. The tract at residues 892–912 (PQPQKDPVEKEKRHMVPQALV) is disordered.

Belongs to the peptidase S9B family.

Its subcellular location is the vacuole membrane. It catalyses the reaction Release of an N-terminal dipeptide, Xaa-Yaa-|-Zaa-, from a polypeptide, preferentially when Yaa is Pro, provided Zaa is neither Pro nor hydroxyproline.. In terms of biological role, type IV dipeptidyl-peptidase which removes N-terminal dipeptides sequentially from polypeptides having unsubstituted N-termini provided that the penultimate residue is proline. This Fusarium vanettenii (strain ATCC MYA-4622 / CBS 123669 / FGSC 9596 / NRRL 45880 / 77-13-4) (Fusarium solani subsp. pisi) protein is Probable dipeptidyl-aminopeptidase B (DAPB).